Consider the following 169-residue polypeptide: Lipoprotein signal peptidase (169 aa).

3 helical membrane-spanning segments follow: residues 1-21, 68-88, and 94-114; these read MPES…LILV, WQRW…VVWL, and HETL…GNLY. Active-site residues include D124 and D143. Residues 135 to 155 traverse the membrane as a helical segment; sequence FFPAFNLADTFITIGAILLAL.

It belongs to the peptidase A8 family.

The protein localises to the cell inner membrane. It carries out the reaction Release of signal peptides from bacterial membrane prolipoproteins. Hydrolyzes -Xaa-Yaa-Zaa-|-(S,diacylglyceryl)Cys-, in which Xaa is hydrophobic (preferably Leu), and Yaa (Ala or Ser) and Zaa (Gly or Ala) have small, neutral side chains.. It participates in protein modification; lipoprotein biosynthesis (signal peptide cleavage). Functionally, this protein specifically catalyzes the removal of signal peptides from prolipoproteins. The polypeptide is Lipoprotein signal peptidase (Ectopseudomonas mendocina (strain ymp) (Pseudomonas mendocina)).